The primary structure comprises 244 residues: L-xylulose reductase (244 aa).

Met-1 is subject to N-acetylmethionine. Residue Leu-11–Arg-39 coordinates NADP(+). Arg-21 carries the post-translational modification Omega-N-methylarginine. Ser-46 carries the phosphoserine modification. Residue Ser-136 coordinates substrate. Tyr-149 functions as the Proton acceptor in the catalytic mechanism. Residue Lys-153 is part of the active site.

The protein belongs to the short-chain dehydrogenases/reductases (SDR) family. As to quaternary structure, homotetramer. In terms of tissue distribution, highly expressed in kidney and liver. Expressed in epididymis. Weakly expressed in brain, heart, lung, spleen and testis.

Its subcellular location is the membrane. It is found in the cytoplasmic vesicle. The protein localises to the secretory vesicle. The protein resides in the acrosome. It carries out the reaction xylitol + NADP(+) = L-xylulose + NADPH + H(+). Catalyzes the NADPH-dependent reduction of several pentoses, tetroses, trioses, alpha-dicarbonyl compounds and L-xylulose. Participates in the uronate cycle of glucose metabolism. May play a role in the water absorption and cellular osmoregulation in the proximal renal tubules by producing xylitol, an osmolyte, thereby preventing osmolytic stress from occurring in the renal tubules. The sequence is that of L-xylulose reductase (DCXR) from Mesocricetus auratus (Golden hamster).